A 533-amino-acid chain; its full sequence is MPATMSQAFIGNFLGNSPKWYKTAILSFLIINPLLFFYVDPFVAGWVLVLEFIFTLAMALKCYPLQPGGLLAIEAVAIGMTSASQVLHEIEANLEVLLLLVFMVAGIYFMKQLLLFGFTKIITKVRSKVLVSLMFCLASAFLSAFLDALTVIAVIIAVAVGFYSIYHKVASGKDFGADHDHTSEGKNAAGEDQLNEEELGAFRGFLRNLLMHAGVGTALGGVCTMVGEPQNLIIAAQANWQFGEFAVRMSPVTVPVLISGILTCYLVEKFGIFGYGAKLPTAVHRILCEYAAHEDARRTNKDNMKLIVQALVGVWLIAGLALHLASVGLIGLSVIILTTAFNGVTDEHALGKAFEEALPFTALLAVFFAVVGVIIDQHLFAPVIQWALGYEGNTQLVIFYIANGLLSMVSDNVFVGTVYINEVKAALINGQITRDQFDLLAVAINTGTNLPSVATPNGQAAFLFLLTSALAPLIRLSYGRMVWMALPYTIVLSIVGVMAIQTGFLEQATQYFYDSHTIIHHSAKEVLGTVSGH.

10 consecutive transmembrane segments (helical) span residues 28-50 (FLIINPLLFFYVDPFVAGWVLVL), 67-87 (PGGLLAIEAVAIGMTSASQVL), 96-116 (VLLLLVFMVAGIYFMKQLLLF), 131-165 (VSLMFCLASAFLSAFLDALTVIAVIIAVAVGFYSI), 254-274 (VPVLISGILTCYLVEKFGIFG), 316-336 (LIAGLALHLASVGLIGLSVII), 364-384 (LAVFFAVVGVIIDQHLFAPVI), 396-416 (LVIFYIANGLLSMVSDNVFVG), 454-474 (ATPNGQAAFLFLLTSALAPLI), and 481-501 (MVWMALPYTIVLSIVGVMAIQ).

The protein belongs to the NhaB Na(+)/H(+) (TC 2.A.34) antiporter family.

The protein resides in the cell inner membrane. It catalyses the reaction 2 Na(+)(in) + 3 H(+)(out) = 2 Na(+)(out) + 3 H(+)(in). Functionally, na(+)/H(+) antiporter that extrudes sodium in exchange for external protons. The polypeptide is Na(+)/H(+) antiporter NhaB (Shewanella baltica (strain OS195)).